The following is a 293-amino-acid chain: 4-diphosphocytidyl-2-C-methyl-D-erythritol kinase (293 aa).

Lys-16 is a catalytic residue. Residue 99–109 (PMGAGLGGGSS) coordinates ATP. Residue Asp-141 is part of the active site.

This sequence belongs to the GHMP kinase family. IspE subfamily.

The enzyme catalyses 4-CDP-2-C-methyl-D-erythritol + ATP = 4-CDP-2-C-methyl-D-erythritol 2-phosphate + ADP + H(+). The protein operates within isoprenoid biosynthesis; isopentenyl diphosphate biosynthesis via DXP pathway; isopentenyl diphosphate from 1-deoxy-D-xylulose 5-phosphate: step 3/6. In terms of biological role, catalyzes the phosphorylation of the position 2 hydroxy group of 4-diphosphocytidyl-2C-methyl-D-erythritol. This chain is 4-diphosphocytidyl-2-C-methyl-D-erythritol kinase, found in Burkholderia lata (strain ATCC 17760 / DSM 23089 / LMG 22485 / NCIMB 9086 / R18194 / 383).